Here is a 313-residue protein sequence, read N- to C-terminus: Porphobilinogen deaminase (313 aa).

Cys242 carries the S-(dipyrrolylmethanemethyl)cysteine modification.

This sequence belongs to the HMBS family. As to quaternary structure, monomer. Requires dipyrromethane as cofactor.

It catalyses the reaction 4 porphobilinogen + H2O = hydroxymethylbilane + 4 NH4(+). The protein operates within porphyrin-containing compound metabolism; protoporphyrin-IX biosynthesis; coproporphyrinogen-III from 5-aminolevulinate: step 2/4. Functionally, tetrapolymerization of the monopyrrole PBG into the hydroxymethylbilane pre-uroporphyrinogen in several discrete steps. This is Porphobilinogen deaminase from Yersinia enterocolitica serotype O:8 / biotype 1B (strain NCTC 13174 / 8081).